The chain runs to 698 residues: MAAAGAAVARSPGIGAGPALRARRSPPPRAARLPRLLVLLAAAAVGPGAGGAARLYRAGEDAVWVLDSGSVRGATANSSAAWLVQFYSSWCGHCIGYAPTWRALAGDVRDWASAIRVAALDCMEEKNQAVCHDYDIHFYPTFRYFKAFTKEFTTGENFKGPDRELRTVRQTMIDFLQNHTEGSRPPACPRLDPIQPSDVLSLLDNRGSHYVAIVFESNSSYLGREVILDLIPYESIVVTRALDGDKAFLEKLGVSSVPSCYLIYPNGSHGLINVVKPLRAFFSSYLKSLPDVRKKSLPLPEKPHKEENSEIVVWREFDKSKLYTVDLESGLHYLLRVELAAHKSLAGAELKTLKDFVTVLAKLFPGRPPVKKLLEMLQEWLASLPLDRIPYNAVLDLVNNKMRISGIFLTNHIKWVGCQGSRSELRGYPCSLWKLFHTLTVEASTHPDALVGTGFEDDPQAVLQTMRRYVHTFFGCKECGEHFEEMAKESMDSVKTPDQAILWLWKKHNMVNGRLAGHLSEDPRFPKLQWPTPDLCPACHEEIKGLASWDEGHVLTFLKQHYGRDNLLDTYSADQGDSSEGGTLARGEEEEKRLTPPEVSHGDRDTQSVRPPGALGPRPALPESLHHSLDGKLQSLDGPGAHKEVGGAAPFLGVDFSSLDMSLCVVLYVASSLFLMVMYFFFRVRSRRWKVKHHHPAV.

Positions 1–21 are cleaved as a signal peptide; that stretch reads MAAAGAAVARSPGIGAGPALR. The Thioredoxin domain occupies 34-178; that stretch reads PRLLVLLAAA…RQTMIDFLQN (145 aa). N-linked (GlcNAc...) asparagine glycosylation is present at asparagine 77. Catalysis depends on nucleophile residues cysteine 91 and cysteine 94. Disulfide bonds link cysteine 91–cysteine 94 and cysteine 122–cysteine 131. Residues asparagine 178, asparagine 218, and asparagine 266 are each glycosylated (N-linked (GlcNAc...) asparagine). A disulfide bond links cysteine 418 and cysteine 430. An ERV/ALR sulfhydryl oxidase domain is found at 421–530; it reads SRSELRGYPC…EDPRFPKLQW (110 aa). FAD is bound by residues arginine 426, tryptophan 433, histidine 437, glutamate 478, histidine 482, 505–512, lysine 527, and tryptophan 530; that span reads WKKHNMVN. Cysteine 476 and cysteine 479 form a disulfide bridge. Cysteine 536 and cysteine 539 are joined by a disulfide. The tract at residues 570–624 is disordered; that stretch reads TYSADQGDSSEGGTLARGEEEEKRLTPPEVSHGDRDTQSVRPPGALGPRPALPES. Polar residues predominate over residues 572 to 581; that stretch reads SADQGDSSEG. Serine 579 is subject to Phosphoserine. Positions 586-607 are enriched in basic and acidic residues; the sequence is RGEEEEKRLTPPEVSHGDRDTQ. Low complexity predominate over residues 610–622; sequence RPPGALGPRPALP. Residues 662-682 form a helical membrane-spanning segment; the sequence is SLCVVLYVASSLFLMVMYFFF.

It belongs to the quiescin-sulfhydryl oxidase (QSOX) family. It depends on FAD as a cofactor. Expressed in pancreas, brain, placenta, kidney, heart and fetal tissues. Weakly expressed in lung, liver and skeletal muscles.

It is found in the membrane. The protein localises to the secreted. Its subcellular location is the cell membrane. It localises to the nucleus membrane. The enzyme catalyses 2 R'C(R)SH + O2 = R'C(R)S-S(R)CR' + H2O2. In terms of biological role, catalyzes the oxidation of sulfhydryl groups in peptide and protein thiols to disulfides with the reduction of oxygen to hydrogen peroxide. May contribute to disulfide bond formation in a variety of secreted proteins. Also seems to play a role in regulating the sensitization of neuroblastoma cells for interferon-gamma-induced apoptosis. The chain is Sulfhydryl oxidase 2 (QSOX2) from Homo sapiens (Human).